The primary structure comprises 216 residues: 7-carboxy-7-deazaguanine synthase (216 aa).

Substrate is bound by residues 12–14 and Arg27; that span reads LQG. The 199-residue stretch at 18–216 folds into the Radical SAM core domain; it reads RAGRAAVFCR…LQTHKYLGIP (199 aa). [4Fe-4S] cluster is bound by residues Cys31, Cys46, and Cys49. Thr51 is a binding site for Mg(2+). Thr93 serves as a coordination point for substrate. Residues Gly95, 136-138, and 176-179 each bind S-adenosyl-L-methionine; these read SPK and QPRD. Pro216 is a substrate binding site.

The protein belongs to the radical SAM superfamily. 7-carboxy-7-deazaguanine synthase family. Homodimer. [4Fe-4S] cluster serves as cofactor. The cofactor is S-adenosyl-L-methionine. Mg(2+) is required as a cofactor.

It catalyses the reaction 6-carboxy-5,6,7,8-tetrahydropterin + H(+) = 7-carboxy-7-deazaguanine + NH4(+). The protein operates within purine metabolism; 7-cyano-7-deazaguanine biosynthesis. In terms of biological role, catalyzes the complex heterocyclic radical-mediated conversion of 6-carboxy-5,6,7,8-tetrahydropterin (CPH4) to 7-carboxy-7-deazaguanine (CDG), a step common to the biosynthetic pathways of all 7-deazapurine-containing compounds. The protein is 7-carboxy-7-deazaguanine synthase of Nitratidesulfovibrio vulgaris (strain ATCC 29579 / DSM 644 / CCUG 34227 / NCIMB 8303 / VKM B-1760 / Hildenborough) (Desulfovibrio vulgaris).